The chain runs to 75 residues: Small ribosomal subunit protein bS18 (75 aa).

Belongs to the bacterial ribosomal protein bS18 family. In terms of assembly, part of the 30S ribosomal subunit. Forms a tight heterodimer with protein bS6.

In terms of biological role, binds as a heterodimer with protein bS6 to the central domain of the 16S rRNA, where it helps stabilize the platform of the 30S subunit. In Cellvibrio japonicus (strain Ueda107) (Pseudomonas fluorescens subsp. cellulosa), this protein is Small ribosomal subunit protein bS18.